The primary structure comprises 283 residues: Probable endonuclease 4 (283 aa).

Positions 69, 109, 145, 179, 182, 216, 229, 231, and 261 each coordinate Zn(2+).

The protein belongs to the AP endonuclease 2 family. Zn(2+) is required as a cofactor.

The catalysed reaction is Endonucleolytic cleavage to 5'-phosphooligonucleotide end-products.. Endonuclease IV plays a role in DNA repair. It cleaves phosphodiester bonds at apurinic or apyrimidinic (AP) sites, generating a 3'-hydroxyl group and a 5'-terminal sugar phosphate. The protein is Probable endonuclease 4 of Desulfosudis oleivorans (strain DSM 6200 / JCM 39069 / Hxd3) (Desulfococcus oleovorans).